Here is a 55-residue protein sequence, read N- to C-terminus: Large ribosomal subunit protein bL33 (55 aa).

It belongs to the bacterial ribosomal protein bL33 family.

The polypeptide is Large ribosomal subunit protein bL33 (Gluconobacter oxydans (strain 621H) (Gluconobacter suboxydans)).